A 292-amino-acid chain; its full sequence is Ferric aerobactin-binding protein VatD (292 aa).

The signal sequence occupies residues 1 to 12; the sequence is MLSAALAFNSYA. A Fe/B12 periplasmic-binding domain is found at 30–292; the sequence is KVVALDWVLT…HITGRLTQPQ (263 aa). The desferrioxamine B site is built by W61, R77, Y118, R185, W213, F215, W269, and F271.

This sequence belongs to the bacterial solute-binding protein 8 family. The complex is composed of two ATP-binding proteins (VatC), two transmembrane proteins (VatB) and a solute-binding protein (VatD).

The protein resides in the periplasm. Part of the ABC transporter complex VatCDB involved in the import of iron(3+)-complexed aerobactin, a citrate-hydroxamate siderophore produced by other bacteria. Binds the iron(3+)-aerobactin complex and transfers it to the membrane-bound permease. Functions in the import of iron(3+)-complexed vulnibactin, a catecholate siderophore synthesized by V.vulnificus, in the absence of FatB. The chain is Ferric aerobactin-binding protein VatD from Vibrio vulnificus.